The following is a 472-amino-acid chain: FAD-dependent monooxygenase dpmaE (472 aa).

The N-terminal stretch at 1–24 is a signal peptide; the sequence is MSQRQFKVIIIGGSVTGLTLAHSL. Residues glutamate 35, glycine 49, and arginine 108 each contribute to the FAD site. N-linked (GlcNAc...) asparagine glycans are attached at residues asparagine 128 and asparagine 179. FAD is bound by residues aspartate 305 and alanine 318. N-linked (GlcNAc...) asparagine glycosylation occurs at asparagine 369. A helical transmembrane segment spans residues 440-460; sequence LLPLMFTLPLLYFGLSWIVGI.

The protein belongs to the paxM FAD-dependent monooxygenase family. The cofactor is FAD.

It localises to the membrane. The protein operates within secondary metabolite biosynthesis; terpenoid biosynthesis. FAD-dependent monooxygenase; part of the gene cluster that mediates the biosynthesis of the diterpenoid pyrones subglutinols A and B. The first step of the pathway is the synthesis of the alpha-pyrone moiety by the polyketide synthase dpmaA via condensation of one acetyl-CoA starter unit with 3 malonyl-CoA units and 2 methylations. The alpha-pyrone is then combined with geranylgeranyl pyrophosphate (GGPP) formed by the GGPP synthase dpmaD through the action of the prenyltransferase dpmaC to yield a linear alpha-pyrone diterpenoid. Subsequent steps in the diterpenoid pyrone biosynthetic pathway involve the decalin core formation, which is initiated by the epoxidation of the C10-C11 olefin by the FAD-dependent oxidoreductase dpmaE, and is followed by a cyclization cascade catalyzed by the terpene cyclase dpmaB. The dehydrogenase dpmaF is then involved in tetrahydrofuran (THF) ring formation at the C5 unit to complete the formation of subglutinols A and B. In Metarhizium anisopliae (Entomophthora anisopliae), this protein is FAD-dependent monooxygenase dpmaE.